Consider the following 111-residue polypeptide: uncharacterized protein (111 aa).

The helical transmembrane segment at 64 to 86 threads the bilayer; the sequence is VLCWLVLPLYCCNLLNLFFNIFL.

It localises to the membrane. This is an uncharacterized protein from Saccharomyces cerevisiae (strain ATCC 204508 / S288c) (Baker's yeast).